We begin with the raw amino-acid sequence, 207 residues long: LexA repressor (207 aa).

Positions 28–48 form a DNA-binding region, H-T-H motif; sequence VREIGEAVGLASSSTVHGHLS. Active-site for autocatalytic cleavage activity residues include Ser-130 and Lys-168.

It belongs to the peptidase S24 family. In terms of assembly, homodimer.

The catalysed reaction is Hydrolysis of Ala-|-Gly bond in repressor LexA.. Its function is as follows. Represses a number of genes involved in the response to DNA damage (SOS response), including recA and lexA. In the presence of single-stranded DNA, RecA interacts with LexA causing an autocatalytic cleavage which disrupts the DNA-binding part of LexA, leading to derepression of the SOS regulon and eventually DNA repair. The chain is LexA repressor from Staphylococcus aureus (strain MSSA476).